Reading from the N-terminus, the 361-residue chain is Chorismate synthase (361 aa).

An NADP(+)-binding site is contributed by Arg47. Residues 124-126 (RAS), Gly286, 301-305 (KPTAT), and Arg327 each bind FMN.

Belongs to the chorismate synthase family. Homotetramer. FMNH2 serves as cofactor.

It catalyses the reaction 5-O-(1-carboxyvinyl)-3-phosphoshikimate = chorismate + phosphate. The protein operates within metabolic intermediate biosynthesis; chorismate biosynthesis; chorismate from D-erythrose 4-phosphate and phosphoenolpyruvate: step 7/7. Functionally, catalyzes the anti-1,4-elimination of the C-3 phosphate and the C-6 proR hydrogen from 5-enolpyruvylshikimate-3-phosphate (EPSP) to yield chorismate, which is the branch point compound that serves as the starting substrate for the three terminal pathways of aromatic amino acid biosynthesis. This reaction introduces a second double bond into the aromatic ring system. This chain is Chorismate synthase, found in Prochlorococcus marinus (strain NATL2A).